A 426-amino-acid polypeptide reads, in one-letter code: D-amino acid dehydrogenase (426 aa).

3–17 (VVVLGAGVIGVTTAW) contacts FAD.

Belongs to the DadA oxidoreductase family. FAD is required as a cofactor.

It carries out the reaction a D-alpha-amino acid + A + H2O = a 2-oxocarboxylate + AH2 + NH4(+). It participates in amino-acid degradation; D-alanine degradation; NH(3) and pyruvate from D-alanine: step 1/1. Oxidative deamination of D-amino acids. This is D-amino acid dehydrogenase from Phenylobacterium zucineum (strain HLK1).